The following is a 119-amino-acid chain: Large ribosomal subunit protein uL22 (119 aa).

It belongs to the universal ribosomal protein uL22 family. In terms of assembly, part of the 50S ribosomal subunit.

This protein binds specifically to 23S rRNA; its binding is stimulated by other ribosomal proteins, e.g. L4, L17, and L20. It is important during the early stages of 50S assembly. It makes multiple contacts with different domains of the 23S rRNA in the assembled 50S subunit and ribosome. Its function is as follows. The globular domain of the protein is located near the polypeptide exit tunnel on the outside of the subunit, while an extended beta-hairpin is found that lines the wall of the exit tunnel in the center of the 70S ribosome. This Rickettsia peacockii (strain Rustic) protein is Large ribosomal subunit protein uL22.